A 674-amino-acid polypeptide reads, in one-letter code: Pentatricopeptide repeat-containing protein At4g17616 (674 aa).

PPR repeat units follow at residues 409 to 443 (GSRLCADVIDACVAIGWLEAAHDILDDMNSAGYPM), 444 to 478 (ELATYRMVLSGYYKSKMLRNAEVLLKQMTKAGLIT), 519 to 553 (MLYELNSSLYYFCKAKMQGDALITYRKIPKMKIPP), 554 to 584 (TVQSFWILIDMYSSLGMYREITIVWGDIKRN), and 593 to 627 (TQDLLEKLVVNFLRGGYFERVMELISYMKENDMYN).

It belongs to the PPR family. P subfamily.

This chain is Pentatricopeptide repeat-containing protein At4g17616, found in Arabidopsis thaliana (Mouse-ear cress).